A 484-amino-acid chain; its full sequence is uncharacterized protein (484 aa).

Residues 25–45 (PLSLFVVLAAVPLPIYFSGLL) traverse the membrane as a helical segment. The EF-hand domain occupies 384–419 (LSFEETKELWVRADLDGNGVFDYEELKKIWNMTMVN). Ca(2+)-binding residues include Asp397, Asp399, Asn401, and Glu408.

The protein resides in the membrane. This is an uncharacterized protein from Arabidopsis thaliana (Mouse-ear cress).